A 355-amino-acid polypeptide reads, in one-letter code: MSYKLLIINPGSTSTKIGVYENEKELFEETLRHTNEEIKRYETIYDQFQFRKDVILNILKEKNFDITTLSAIVGRGGMLKPVEGGTYAVNDAMIEDLKVGVQGPHASNLGGIIAKSIGDELNIPSFIVDPVVTDELDDVARLSGVPELPRKSKFHALNQKAVAKRYGKDSGKGYENLNLIVVHMGGGVSVGAHKQGKVVDVNNALDGDGPFSPERAGTVPVGDLIKMCFSGQYTESEVYTKVVGKGGFVGYLNTNDVKGVIDNMEAGDKDCEKIYKAFLYQITKTIGEMAAALNGKVDQILLTGGIAYSPTLVPDLKSNVEWIAPVTVYPGEDELLALAQGAIRVLDGEEKAKIY.

Belongs to the acetokinase family.

It is found in the cytoplasm. It catalyses the reaction butanoate + ATP = butanoyl phosphate + ADP. The sequence is that of Probable butyrate kinase from Clostridium botulinum (strain Eklund 17B / Type B).